A 503-amino-acid chain; its full sequence is Lysine--tRNA ligase (503 aa).

The 'HIGH' region motif lies at 23–31 (PSGPIHVGN). The short motif at 267–271 (AMHSS) is the 'KMSKS' region element.

It belongs to the class-I aminoacyl-tRNA synthetase family.

The protein localises to the cytoplasm. The enzyme catalyses tRNA(Lys) + L-lysine + ATP = L-lysyl-tRNA(Lys) + AMP + diphosphate. In Thermoplasma volcanium (strain ATCC 51530 / DSM 4299 / JCM 9571 / NBRC 15438 / GSS1), this protein is Lysine--tRNA ligase.